The primary structure comprises 63 residues: Large ribosomal subunit protein uL30 (63 aa).

Belongs to the universal ribosomal protein uL30 family. As to quaternary structure, part of the 50S ribosomal subunit.

This is Large ribosomal subunit protein uL30 from Rickettsia massiliae (strain Mtu5).